A 146-amino-acid chain; its full sequence is Hemoglobin subunit beta (146 aa).

Position 1 is an N-acetylvaline (valine 1). In terms of domain architecture, Globin spans 2-146 (HLTAEEKAAV…VATALAHKYH (145 aa)). The residue at position 12 (threonine 12) is a Phosphothreonine. Serine 44 carries the post-translational modification Phosphoserine. Position 59 is an N6-acetyllysine (lysine 59). A heme b-binding site is contributed by histidine 63. Lysine 82 carries the N6-acetyllysine modification. Histidine 92 contributes to the heme b binding site. S-nitrosocysteine is present on cysteine 93. Position 144 is an N6-acetyllysine (lysine 144).

The protein belongs to the globin family. In terms of assembly, heterotetramer of two alpha chains and two beta chains. In terms of tissue distribution, red blood cells.

Its function is as follows. Involved in oxygen transport from the lung to the various peripheral tissues. In Mustela lutreola (European mink), this protein is Hemoglobin subunit beta (HBB).